A 426-amino-acid chain; its full sequence is Phosphomethylpyrimidine synthase (426 aa).

Substrate is bound by residues Met94, Tyr123, His162, 184–186 (SRG), 225–228 (NGMR), and Glu264. Residue His268 coordinates Zn(2+). Tyr291 provides a ligand contact to substrate. Residue His332 participates in Zn(2+) binding. The [4Fe-4S] cluster site is built by Cys406, Cys409, and Cys413.

This sequence belongs to the ThiC family. [4Fe-4S] cluster is required as a cofactor.

It catalyses the reaction 5-amino-1-(5-phospho-beta-D-ribosyl)imidazole + S-adenosyl-L-methionine = 4-amino-2-methyl-5-(phosphooxymethyl)pyrimidine + CO + 5'-deoxyadenosine + formate + L-methionine + 3 H(+). It participates in cofactor biosynthesis; thiamine diphosphate biosynthesis. Its function is as follows. Catalyzes the synthesis of the hydroxymethylpyrimidine phosphate (HMP-P) moiety of thiamine from aminoimidazole ribotide (AIR) in a radical S-adenosyl-L-methionine (SAM)-dependent reaction. The polypeptide is Phosphomethylpyrimidine synthase (Methanospirillum hungatei JF-1 (strain ATCC 27890 / DSM 864 / NBRC 100397 / JF-1)).